A 458-amino-acid chain; its full sequence is MEFDTIAAISTALGEGAIAIVRVSGDDAVEKVDRIFKGKDLTEVPSHTIHYGHIVDLDTNQVIEEVMVSIMRAPRTFTRENIVEINCHGGLVSVNKVLQLILAQGVRLAEPGEFTKRAFLNGRIDLSQAEAVMDLIRAKTDRAMNVAINQMEGRLSKLIGLLRQEILETLAHVEVNIDYPEYDDVEEMTHNILIEKATHVRSEIEKILETSKQGKILREGIATAIIGRPNVGKSSLLNSLVQEKKAIVTDIAGTTRDVIEEYVNVRGVPLKLIDTAGIRETEDVVERIGVERSKEMMSQADLVLVVVNYSEALTNEDEDLFRAVQGKDFIVIVNKTDLPQAIDMERVTELAAGNRVITTSLIEEQGIDELEKAIADLFFEGTIDSADMTYVSNARHIGLLTQAGKTIGDAVEAIENGVPIDMVQIDLTRTWEILGEITGDTVHESLIDQLFSQFCLGK.

Positions 22, 84, and 123 each coordinate (6S)-5-formyl-5,6,7,8-tetrahydrofolate. A TrmE-type G domain is found at 220 to 379; that stretch reads GIATAIIGRP…LEKAIADLFF (160 aa). Asparagine 230 is a binding site for K(+). GTP contacts are provided by residues 230 to 235, 249 to 255, and 274 to 277; these read NVGKSS, TDIAGTT, and DTAG. Position 234 (serine 234) interacts with Mg(2+). Residues threonine 249, isoleucine 251, and threonine 254 each coordinate K(+). Threonine 255 lines the Mg(2+) pocket. Lysine 458 contacts (6S)-5-formyl-5,6,7,8-tetrahydrofolate.

Belongs to the TRAFAC class TrmE-Era-EngA-EngB-Septin-like GTPase superfamily. TrmE GTPase family. As to quaternary structure, homodimer. Heterotetramer of two MnmE and two MnmG subunits. Requires K(+) as cofactor.

Its subcellular location is the cytoplasm. Functionally, exhibits a very high intrinsic GTPase hydrolysis rate. Involved in the addition of a carboxymethylaminomethyl (cmnm) group at the wobble position (U34) of certain tRNAs, forming tRNA-cmnm(5)s(2)U34. The protein is tRNA modification GTPase MnmE of Bacillus cereus (strain ATCC 14579 / DSM 31 / CCUG 7414 / JCM 2152 / NBRC 15305 / NCIMB 9373 / NCTC 2599 / NRRL B-3711).